We begin with the raw amino-acid sequence, 156 residues long: Snaclec A3 (156 aa).

A signal peptide spans 1–23 (MGRSISVSFGLLVVFLSLSGTGA). 3 disulfide bridges follow: Cys27/Cys38, Cys55/Cys154, and Cys129/Cys146. In terms of domain architecture, C-type lectin spans 34-155 (HEGHCYKVFN…CGQPYRFTCE (122 aa)).

This sequence belongs to the snaclec family. Heterodimer; disulfide-linked. Expressed by the venom gland.

The protein localises to the secreted. In terms of biological role, interferes with one step of hemostasis (modulation of platelet aggregation, or coagulation cascade, for example). This Macrovipera lebetinus (Levantine viper) protein is Snaclec A3.